The primary structure comprises 101 residues: Large ribosomal subunit protein bL28 (101 aa).

The protein belongs to the bacterial ribosomal protein bL28 family.

The chain is Large ribosomal subunit protein bL28 from Caulobacter sp. (strain K31).